A 208-amino-acid chain; its full sequence is Thymidylate kinase (208 aa).

Residue 10–17 coordinates ATP; sequence GLEGAGKT.

It belongs to the thymidylate kinase family.

The enzyme catalyses dTMP + ATP = dTDP + ADP. Phosphorylation of dTMP to form dTDP in both de novo and salvage pathways of dTTP synthesis. This is Thymidylate kinase from Actinobacillus pleuropneumoniae serotype 5b (strain L20).